The sequence spans 267 residues: Undecaprenyl-diphosphatase 1 (267 aa).

The next 8 helical transmembrane spans lie at 6–26 (VLVV…AAGL), 41–60 (AALS…IYFW), 83–103 (HLLL…WLVL), 109–129 (LVGQ…LWGC), 142–162 (MSWV…VPGV), 185–205 (FSML…FWGL), 217–237 (LLMA…GMMA), and 244–264 (FVPF…LVYF).

It belongs to the UppP family.

The protein localises to the cell inner membrane. It catalyses the reaction di-trans,octa-cis-undecaprenyl diphosphate + H2O = di-trans,octa-cis-undecaprenyl phosphate + phosphate + H(+). In terms of biological role, catalyzes the dephosphorylation of undecaprenyl diphosphate (UPP). Confers resistance to bacitracin. The protein is Undecaprenyl-diphosphatase 1 of Paramagnetospirillum magneticum (strain ATCC 700264 / AMB-1) (Magnetospirillum magneticum).